A 221-amino-acid polypeptide reads, in one-letter code: GTP-binding nuclear protein Ran-3 (221 aa).

In terms of domain architecture, Small GTPase Ran-type spans 10-174; it reads DYPSFKLVIV…LYLARKLAGD (165 aa). GTP is bound at residue 21–28; the sequence is DGGTGKTT. A switch-I region spans residues 40-48; sequence KKYEPTIGV. GTP-binding positions include G71, 125–128, and 153–155; these read NKVD and SAK. A switch-II region spans residues 71–87; it reads GQEKFGGLRDGYYIHGQ. A disordered region spans residues 201–221; that stretch reads EAELAAAASQPLPDDDDDTFE.

It belongs to the small GTPase superfamily. Ran family. Found in a nuclear export complex with RanGTP, exportin and pre-miRNA. Interacts with RanBP1a and RanBP1b. Interacts with KPNB1.

It localises to the nucleus. Its function is as follows. GTP-binding protein involved in nucleocytoplasmic transport. Required for the import of protein into the nucleus and also for RNA export. Involved in chromatin condensation and control of cell cycle. This is GTP-binding nuclear protein Ran-3 (RAN3) from Arabidopsis thaliana (Mouse-ear cress).